A 347-amino-acid polypeptide reads, in one-letter code: NADH-ubiquinone oxidoreductase chain 2 (347 aa).

A run of 10 helical transmembrane segments spans residues 13–33 (IFAG…WVGL), 55–75 (AAIK…MAIL), 96–116 (LMIM…FWVP), 123–143 (PLMS…SIMY), 149–169 (LNVN…SWGG), 178–198 (ILAY…PYNP), 201–221 (TILN…LLNL), 247–267 (TLLS…WVII), 274–294 (NSLI…YFYL), and 326–346 (LPTL…MLMI).

The protein belongs to the complex I subunit 2 family. As to quaternary structure, core subunit of respiratory chain NADH dehydrogenase (Complex I) which is composed of 45 different subunits. Interacts with TMEM242.

Its subcellular location is the mitochondrion inner membrane. It carries out the reaction a ubiquinone + NADH + 5 H(+)(in) = a ubiquinol + NAD(+) + 4 H(+)(out). Functionally, core subunit of the mitochondrial membrane respiratory chain NADH dehydrogenase (Complex I) which catalyzes electron transfer from NADH through the respiratory chain, using ubiquinone as an electron acceptor. Essential for the catalytic activity and assembly of complex I. The chain is NADH-ubiquinone oxidoreductase chain 2 from Pan paniscus (Pygmy chimpanzee).